Reading from the N-terminus, the 179-residue chain is Small ribosomal subunit protein uS5c (179 aa).

The S5 DRBM domain maps to 26-89; the sequence is FVERLIKISR…TDGRKNLIDV (64 aa).

It belongs to the universal ribosomal protein uS5 family. Part of the 30S ribosomal subunit. Contacts protein S4.

The protein resides in the plastid. Its subcellular location is the chloroplast. With S4 and S12 plays an important role in translational accuracy. This is Small ribosomal subunit protein uS5c (rps5) from Thalassiosira pseudonana (Marine diatom).